Here is a 310-residue protein sequence, read N- to C-terminus: Elongation factor Ts (310 aa).

The interval 80 to 83 (TDFV) is involved in Mg(2+) ion dislocation from EF-Tu.

This sequence belongs to the EF-Ts family.

It localises to the cytoplasm. In terms of biological role, associates with the EF-Tu.GDP complex and induces the exchange of GDP to GTP. It remains bound to the aminoacyl-tRNA.EF-Tu.GTP complex up to the GTP hydrolysis stage on the ribosome. The polypeptide is Elongation factor Ts (Beijerinckia indica subsp. indica (strain ATCC 9039 / DSM 1715 / NCIMB 8712)).